A 310-amino-acid chain; its full sequence is Ribosomal RNA small subunit methyltransferase H (310 aa).

S-adenosyl-L-methionine contacts are provided by residues 33–35 (AGH), Asp-53, Phe-79, Asp-100, and Gln-107.

It belongs to the methyltransferase superfamily. RsmH family.

It localises to the cytoplasm. The enzyme catalyses cytidine(1402) in 16S rRNA + S-adenosyl-L-methionine = N(4)-methylcytidine(1402) in 16S rRNA + S-adenosyl-L-homocysteine + H(+). Functionally, specifically methylates the N4 position of cytidine in position 1402 (C1402) of 16S rRNA. The protein is Ribosomal RNA small subunit methyltransferase H of Clostridium botulinum (strain Alaska E43 / Type E3).